The chain runs to 377 residues: Putative zinc metalloprotease Atu1380 (377 aa).

Zn(2+) is bound at residue histidine 29. The active site involves glutamate 30. Zn(2+) is bound at residue histidine 33. 3 helical membrane-spanning segments follow: residues 118-140 (VAAGPIANFILAILIFAVLFGIY), 299-321 (LGISAVIQLAAVLSVSIGLLNLM), and 351-373 (VAFRIGMMMILGLMVFATWNDIS). The region spanning 129-202 (AILIFAVLFG…TPITVTVERA (74 aa)) is the PDZ domain.

The protein belongs to the peptidase M50B family. The cofactor is Zn(2+).

The protein resides in the cell inner membrane. In Agrobacterium fabrum (strain C58 / ATCC 33970) (Agrobacterium tumefaciens (strain C58)), this protein is Putative zinc metalloprotease Atu1380.